A 2787-amino-acid chain; its full sequence is MEDHGIVETLNFLSSTKIKERNNALDELTTILKEDPERIPTKALSTTAEALVELLASEHTKYCDLLRNLTVSTTNKLSLSENRLSTISYVLRLFVEKSCERFKVKTLKLLLAVVPELMVKDGSKSLLDAVSVHLSFALDALIKSDPFKLKFMIHQWISLVDKICEYFQSQMKLSMVDKTLTNFISILLNLLALDTVGIFQVTRTITWTVIDFLRLSKKENGNTRLIMSLINQLILKCHCFSVIDTLMLIKEAWSYNLTIGCTSNELVQDQLSLFDVMSSELMNHKLPYMIGQENYVEELRSESLVSLYREYILLRLSNYKPQLFTVNHVEFSYIRGSRDKNSWFALPDFRLRDRGGRSVWLKILGITKSLLTYFALNRKNENYSLLFKRRKCDSDIPSILRISDDMDTFLIHLLEENSSHEFEVLGLQLCSFYGTLQDFTKSFAEQLKELLFSKFEKIQCFNWVCFSFIPLLSQKECELSNGDMARLFKVCLPLVKSNESCQLSCLLLANSIKFSKQLLSDEKTINQIYDLYELSDILGPILVTNESFMLWGYLQYVGKDFQSMNGISSADRIFEWLKSKWNQLRGTDAKQDQFCNFISWLGNKYDPENPFNDKKGEGANPVSLCWDESHKIWQHFQEQREFLLGVKPEEKSECFNTPFFNLPKVSLDLTRYNEILYRLLENIESDAFSSPLQKFTWVAKLIQIVDNLCGDSTFSEFIAAYKRTTLITIPQLSFDSQNSYQSFFEEVLSIRTINVDHLVLDKINMKEIVNDFIRMQKNKSQTGTSAINYFEASSEDTTQNNSPYTIGGRFQKPLHSTIDKAVRAYLWSSRNKSISERLVAILEFSDCVSTDVFISYLGTVCQWLKQAIGEKSSYNKILEEFTEVLGEKLLCNHYSSSNQAMLLLTSYIEAIRPQWLSYPEQPLNSDCNDILDWIISRFEDNSFTGVAPTVNLSMLLLSLLQNHDLSHGSIRGGKQRVFATFIKCLQKLDSSNIINIMNSISSYMAQVSYKNQSIIFYEIKSLFGPPQQSIEKSAFYSLAMSMLSLVSYPSLVFSLEDMMTYSGFNHTRAFIQQALNKITVAFRYQNLTELFEYCKFDLIMYWFNRTKVPTSKLEKEWDISLFGFADIHEFLGRYFVEISAIYFSQGFNQKWILDMLHAITGNGDAYLVDNSYYLCIPLAFISGGVNELIFDILPQISGKTTVKYHKKYRLLMLKWIIRFTDLGSLTELRSTVEKLFPTSYLSPYLFENSSVSMRYQYPLHIPLALGATLVQTQFAHEKNNTHEFKLLFLSVITDLEKTSTYIGKLRCARELKYLFVLYENVLVKSSTLNFIIIRLSKFLIDTQIHDEVITIFSSLLNLADKNTFEIEPSLPNLFCKIFIYLRENKQLSPSFQQAIKLLEHRDLIKIKTWKYCLDAIFGNIVQDDIYENTELLDASDCGVDDVVLVSLLFSYARRPVASKIGCSLSKAAAINILKHHVPKEYLSKNFKLWFAALSRRILQQEVQRERSTNFNNEVHLKNFEMVFRHPEQPHMIYQRISTFNKEAELYDSTEVFFISECILTYLVGYSIGNSESEFCFRDNIMNENKDKVAPLDKDVLNAIYPLANNFGMESFICDTYLSVNEPYNCWLSKFARSLIHQISFNIPPIVCLYPLCKGSTAFCELVLTDLFFLSTTYDPKSCLNWSNRIFTQIAMLLHVKDSEIKLKMLFNVIKMIRMGSRCKERNCLRIYSSLDLQEICQISLKIKEFKFGYLLFEEMNMPNIREMNINTLQKIYECINDGDFLAGLPVPHSIEGVLNSINRIDSDTWKRFLFNNADFDANYTTSLEEEKESLIKATEDSGFYGLTSLLESRLSGSSDVYKWNLELGDWKLLTPKVVDSKAKGLYYAIKNLPQDVGFAEKSLEKSLLTIFDSRQHFISQTEWMDTLNAIIEFIKIAAIPQDVTSFPQTLMSIMKADKERLNTIDFYDHKTTLKSRHTLMNVLSRNSLDENVKCSKYLRLGSIIQLANYVQLAIANGAPQDALRNATLMSKTVKNIAKLYDDPSVVSQIEKLASFTSANALWESREYKAPVMIMRDLLAQNEKNISESILYDDFKLLINVPMDQIKARLVKWSSESRLEPAAAIYEKIIVNWDINVEDHESCSDVFYTLGSFLDEQAQKLRSNGEIEDREHRSYTGKSTLKALELIYKNTKLPENERKDAKRHYNRVLLQYNRDSEVLKALLLQKEKFLWHALHFYLNTLVFSNRYDNDIIDKFCGLWFENDDNSKINQLLYKEIGTIPSWKFLPWVNQIASKISMEENEFQKPLQLTMKRLLYKLPYDSLYSVMSILLYEKQSNKDTNISQKIQAVKKILLELQGYDRGAFAKKYLLPVQEFCEMSVELANLKFVQNTKTLRLANLKIGQYWLKQLNMEKLPLPTSNFTVKSSADGRKARPYIVSVNETVGITTTGLSLPKIVTFNISDGTTQKALMKGSNDDLRQDAIMEQVFQQVNKVLQNDKVLRNLDLGIRTYKVVPLGPKAGIIEFVANSTSLHQILSKLHTNDKITFDQARKGMKAVQTKSNEERLKAYLKITNEIKPQLRNFFFDSFPDPLDWFEAKKTYTKGVAASSIVGYILGLGDRHLNNILLDCSTGEPIHIDLGIAFDQGKLLPIPELVPFRLTRDIVDGFGVTGVDGLFRRSCERVYAVLRKDYVKVMCVLNILKWDPLYSWVMSPVKKYEHLFEEEHEITNFDNVSKFISNNDRNENQESYRALKGVEEKLMGNGLSVESSVQDLIQQATDPSNLSVIYMGWSPFY.

The region spanning 1734–2326 (EICQISLKIK…LYSVMSILLY (593 aa)) is the FAT domain. Residues 2434–2746 (NETVGITTTG…ENQESYRALK (313 aa)) enclose the PI3K/PI4K catalytic domain. The segment at 2440 to 2446 (TTTGLSL) is G-loop. A catalytic loop region spans residues 2609–2617 (GLGDRHLNN). The activation loop stretch occupies residues 2629 to 2653 (HIDLGIAFDQGKLLPIPELVPFRLT). In terms of domain architecture, FATC spans 2755-2787 (NGLSVESSVQDLIQQATDPSNLSVIYMGWSPFY).

This sequence belongs to the PI3/PI4-kinase family. ATM subfamily. As to quaternary structure, interacts with XRS2 and associates with DNA double-strand breaks.

It is found in the nucleus. It localises to the chromosome. Its subcellular location is the telomere. The enzyme catalyses L-seryl-[protein] + ATP = O-phospho-L-seryl-[protein] + ADP + H(+). The catalysed reaction is L-threonyl-[protein] + ATP = O-phospho-L-threonyl-[protein] + ADP + H(+). Functionally, serine/threonine protein kinase which activates checkpoint signaling upon genotoxic stresses such as ionizing radiation (IR), ultraviolet light (UV), or DNA replication stalling, thereby acting as a DNA damage sensor. Recognizes the substrate consensus sequence [ST]-Q. Recruited by the MRX-complex to sites of DNA lesions immediately after damage to initiate non-homologous end-joining (NHEJ). Subsequently displaced by the RPA complex in a reaction probably involving the SAE2 protein. Phosphorylates MRE11 and XRS2, 2 subunits of the MRX-complex. The phosphorylation of MRE11 is a feedback response from the checkpoint signaling pathway. Phosphorylates RAD9, CHK1 and RAD53, leading to the activation of the CHK1 and RAD23 kinases involved in the DNA damage response cascade. Phosphorylates histone H2A to form H2AS128ph (gamma-H2A) at sites of DNA damage, also involved in the regulation of DNA damage response mechanism. Also phosphorylates SLX4 and RTT107 which are involved in genome stability. Required for the control of telomere length and genome stability. The protein is Serine/threonine-protein kinase TEL1 (TEL1) of Saccharomyces cerevisiae (strain ATCC 204508 / S288c) (Baker's yeast).